A 3021-amino-acid chain; its full sequence is MSTLPKPQRKTKRNTIRRPQDVKFPGGGQIVGGVYVLPRRGPRLGVRATRKTSERSQPRGRRQPIPKARRSEGRSWAQPGYPWPLYGNEGCGWAGWLLSPRGSRPSWGPNDPRRRSRNLGKVIDTLTCGFADLMGYIPLVGAPVGGVARALAHGVRALEDGINFATGNLPGCSFSIFLLALFSCLIHPAASLEWRNTSGLYVLTNDCSNSSIVYEADDVILHTPGCVPCVQDGNTSTCWTPVTPTVAVRYVGATTASIRSHVDLLVGAATMCSALYVGDMCGAVFLVGQAFTFRPRRHQTVQTCNCSLYPGHLSGHRMAWDMMMNWSPAVGMVVAHVLRLPQTLFDIMAGAHWGILAGLAYYSMQGNWAKVAIIMVMFSGVDAHTYTTGGTASRHTQAFAGLFDIGPQQKLQLVNTNGSWHINSTALNCNESINTGFIAGLFYYHKFNSTGCPQRLSSCKPITFFRQGWGPLTDANITGPSDDRPYCWHYAPRPCDIVPASSVCGPVYCFTPSPVVVGTTDARGVPTYTWGENEKDVFLLKSQRPPSGRWFGCSWMNSTGFLKTCGAPPCNIYGGEGNPHNESDLFCPTDCFRKHPETTYSRCGAGPWLTPRCMVDYPYRLWHYPCTVDFRLFKVRMFVGGFEHRFTAACNWTRGERCDIEDRDRSEQHPLLHSTTELAILPCSFTPMPALSTGLIHLHQNIVDVQYLYGVGSGMVGWALKWEFVILVFLLLADARVCVALWLMLMISQTEAALENLVTLNAVAAAGTHGIGWYLVAFCAAWYVRGKLVPLVTYSLTGLWSLALLVLLLPQRAYAWSGEDSATLGAGVLVLFGFFTLSPWYKHWIGRLMWWNQYTICRCESALHVWVPPLLARGSRDGVILLTSLLYPSLIFDITKLLMAVLGPLYLIQATITTTPYFVRAHVLVRLCMLVRSVIGGKYFQMIILSIGRWFNTYLYDHLAPMQHWAAAGLKDLAVATEPVIFSPMEIKVITWGADTAACGDILCGLPVSARLGREVLLGPADDYREMGWRLLAPITAYAQQTRGLLGTIVTSLTGRDKNVVTGEVQVLSTATQTFLGTTVGGVIWTVYHGAGSRTLAGAKHPALQMYTNVDQDLVGWPAPPGAKSLEPCACGSSDLYLVTRDADVIPARRRGDSTASLLSPRPLACLKGSSGGPVMCPSGHVAGIFRAAVCTRGVAKSLQFIPVETLSTQARSPSFSDNSTPPAVPQSYQVGYLHAPTGSGKSTKVPAAYVAQGYNVLVLNPSVAATLGFGSFMSRAYGIDPNIRTGNRTVTTGAKLTYSTYGKFLADGGCSGGAYDVIICDECHAQDATSILGIGTVLDQAETAGVRLTVLATATPPGSITVPHSNIEEVALGSEGEIPFYGKAIPIALLKGGRHLIFCHSKKKCDEIASKLRGMGLNAVAYYRGLDVSVIPTTGDVVVCATDALMTGFTGDFDSVIDCNVAVEQYVDFSLDPTFSIETRTAPQDAVSRSQRRGRTGRGRLGTYRYVASGERPSGMFDSVVLCECYDAGCSWYDLQPAETTVRLRAYLSTPGLPVCQDHLDFWESVFTGLTHIDAHFLSQTKQQGLNFSYLTAYQATVCARAQAPPPSWDEMWKCLVRLKPTLHGPTPLLYRLGPVQNETCLTHPITKYLMACMSADLEVTTSTWVLLGGVLAALAAYCLSVGCVVIVGHIELEGKPALVPDKEVLYQQYDEMEECSQAAPYIEQAQVIAHQFKEKILGLLQRATQQQAVIEPIVTTNWQKLEAFWHKHMWNFVSGIQYLAGLSTLPGNPAVASLMAFTASVTSPLTTNQTMFFNILGGWVATHLAGPQSSSAFVVSGLAGAAIGGIGLGRVLLDILAGYGAGVSGALVAFKIMGGECPTAEDMVNLLPAILSPGALVVGVICAAILRRHVGPGEGAVQWMNRLIAFASRGNHVSPTHYVPESDAAARVTALLSSLTVTSLLRRLHQWINEDYPSPCSDDWLRTIWDWVCSVLADFKAWLSAKIMPALPGLPFISCQKGYKGVWRGDGVMSTRCPCGAAITGHVKNGSMRLAGPRTCANMWHGTFPINEYTTGPSTPCPSPNYTRALWRVAANSYVEVRRVGDFHYITGATEDELKCPCQVPAAEFFTEVDGVRLHRYAPPCKPLLRDDITFMVGLHSYTIGSQLPCEPEPDVSVLTSMLRDPSHITAETAARRLARGSPPSEASSSASQLSAPSLKATCQTHRPHPDAELVDANLLWRQEMGSNITRVESETKVVVLDSFEPLRAETDDVEPSVAAECFKKPPKYPPALPIWARPDYNPPLLDRWKAPDYVPPTVHGCALPPRGAPPVPPPRRKRTIQLDGSNVSAALAALAEKSFPSSKPQEENSSSSGVDTQSSTTSKVPPSPGGESDSESCSSMPPLEGEPGDPDLSCDSWSTVSDSEEQSVVCCSMSYSWTGALITPCSAEEEKLPISPLSNSLLRHHNLVYSTSSRSASQRQKKVTFDRLQVLDDHYKTALKEVKERASRVKARMLTIEEACALVPPHSARSKFGYSAKDVRSLSSRAINQIRSVWEDLLEDTTTPIPTTIMAKNEVFCVDPAKGGRKPARLIVYPDLGVRVCEKRALYDVIQKLSIETMGPAYGFQYSPQQRVERLLKMWTSKKTPLGFSYDTRCFDSTVTEQDIRVEEEIYQCCNLEPEARKVISSLTERLYCGGPMFNSKGAQCGYRRCRASGVLPTSFGNTITCYIKATAAAKAANLRNPDFLVCGDDLVVVAESDGVDEDRAALRAFTEAMTRYSAPPGDAPQATYDLELITSCSSNVSVARDDKGRRYYYLTRDATTPLARAAWETARHTPVNSWLGNIIMYAPTIWVRMVMMTHFFSILQSQEILDRPLDFEMYGATYSVTPLDLPAIIERLHGLSAFTLHSYSPVELNRVAGTLRKLGCPPLRAWRHRARAVRAKLIAQGGKAKICGLYLFNWAVRTKTNLTPLPAAGQLDLSSWFTVGVGGNDIYHSVSRARTRHLLLCLLLLTVGVGIFLLPAR.

An N-acetylserine; by host modification is found at S2. Residues S2 to K23 form an interaction with STAT1 region. The tract at residues S2–P58 is interaction with EIF2AK2/PKR. The interval S2–R59 is interaction with DDX3X. The interval S2–S75 is disordered. The Cytoplasmic portion of the chain corresponds to S2 to N168. Short sequence motifs (nuclear localization signal) lie at residues P5–R13 and P38–R43. Over residues P7–I16 the composition is skewed to basic residues. Residue S53 is modified to Phosphoserine; by host. Short sequence motifs (nuclear localization signal) lie at residues P58 to P64 and P66 to S71. Positions P58–A68 are enriched in basic residues. S99 carries the phosphoserine; by host modification. The interval P112 to A152 is important for endoplasmic reticulum and mitochondrial localization. S116 is subject to Phosphoserine; by host PKA. An interaction with APOA2 region spans residues V122 to S173. The tract at residues F164–G167 is important for lipid droplets localization. The chain crosses the membrane as a helical span at residues L169–A189. Residues L178–S191 constitute a propeptide, ER anchor for the core protein, removed in mature form by host signal peptidase. Over A190–G358 the chain is Lumenal. N196, N209, and N234 each carry an N-linked (GlcNAc...) asparagine; by host glycan. Positions L265 to R296 are important for fusion. A glycan (N-linked (GlcNAc...) asparagine; by host) is linked at N305. A helical membrane pass occupies residues L359–S379. At G380–L731 the chain is on the lumenal side. The segment at T385–Q412 is HVR1. N417, N423, and N430 each carry an N-linked (GlcNAc...) (high mannose) asparagine; by host glycan. Intrachain disulfides connect C429-C553, C452-C459, C487-C495, and C504-C509. An N-linked (GlcNAc...) asparagine; by host glycan is attached at N448. Positions D474–G479 are HVR2. N-linked (GlcNAc...) asparagine; by host glycosylation is present at N476. A CD81-binding 1 region spans residues S481–P494. N-linked (GlcNAc...) asparagine; by host glycosylation occurs at N533. The segment at P545–G552 is CD81-binding 2. N-linked (GlcNAc...) asparagine; by host glycosylation occurs at N557. C565 and C570 form a disulfide bridge. N-linked (GlcNAc...) asparagine; by host glycosylation is present at N578. Disulfide bonds link C587-C591, C603-C626, and C613-C650. An N-linked (GlcNAc...) (high mannose) asparagine; by host glycan is attached at N651. Residues C658 and C683 are joined by a disulfide bond. Positions S666–E677 are PKR/eIF2-alpha phosphorylation homology domain (PePHD). The chain crosses the membrane as a helical span at residues L732–A752. Over A753 to V763 the chain is Lumenal. Residues A764–V784 traverse the membrane as a helical segment. At R785 to K787 the chain is on the cytoplasmic side. The helical transmembrane segment at L788 to L809 threads the bilayer. The Lumenal segment spans residues P810–E819. A helical membrane pass occupies residues D820–W840. At Y841–W844 the chain is on the cytoplasmic side. A helical transmembrane segment spans residues I845–H864. Residues V865 to Y887 lie on the Lumenal side of the membrane. Residues P888 to I908 traverse the membrane as a helical segment. The region spanning L905–L1032 is the Peptidase C18 domain. At Q909–T1663 the chain is on the cytoplasmic side. The segment at A910–R1212 is protease NS2-3. C928 is lipidated: S-palmitoyl cysteine; by host. The interval I935 to L955 is interaction with host SCPS1. Catalysis depends on for protease NS2 activity; shared with dimeric partner residues H958, E978, and C999. In terms of domain architecture, Peptidase S29 spans A1033–P1214. Catalysis depends on charge relay system; for serine protease NS3 activity residues H1089 and D1113. C1129 and C1131 together coordinate Zn(2+). S1171 acts as the Charge relay system; for serine protease NS3 activity in catalysis. Residues C1177 and H1181 each coordinate Zn(2+). Positions P1223–S1375 constitute a Helicase ATP-binding domain. Residue A1236–S1243 coordinates ATP. The Mg(2+) site is built by S1243 and E1323. A DECH box motif is present at residues D1322–H1325. The region spanning Y1382–R1544 is the Helicase C-terminal domain. Residues Q1492–T1504 are RNA-binding. The chain crosses the membrane as a helical span at residues S1664–G1684. An NS3-binding region spans residues C1685 to G1696. Topologically, residues C1685–Q1811 are cytoplasmic. Residues T1812–Q1830 form a helical membrane-spanning segment. Topologically, residues S1831–A1834 are lumenal. The helical transmembrane segment at F1835–L1855 threads the bilayer. A topological domain (cytoplasmic) is located at residue D1856. The helical transmembrane segment at I1857 to G1877 threads the bilayer. Topologically, residues E1878–N1887 are lumenal. A helical membrane pass occupies residues L1888–L1908. Residues R1909–C1978 are Cytoplasmic-facing. C1978 is lipidated: S-palmitoyl cysteine; by host. Residues S1979–A2008 lie within the membrane without spanning it. Residues L2009–R3000 are Cytoplasmic-facing. Positions 2017, 2035, 2037, and 2058 each coordinate Zn(2+). The interval E2126–A2214 is FKBP8-binding. The tract at residues E2126–T2338 is transcriptional activation. Residues P2141–P2145 form an interaction with non-structural protein 4A region. The interval A2193–P2215 is disordered. The tract at residues R2195 to E2448 is interaction with host SKP2. 6 positions are modified to phosphoserine; by host: S2200, S2203, S2207, S2210, S2213, and S2216. The span at S2200–P2215 shows a compositional bias: low complexity. Positions S2216–K2255 are ISDR. An interaction with EIF2AK2/PKR region spans residues S2216 to F2281. The NS4B-binding stretch occupies residues K2255–Y2312. The interval D2305–P2387 is V3. An SH3-binding motif is present at residues P2328–P2331. Positions P2333–L2341 match the Nuclear localization signal motif. K2356 participates in a covalent cross-link: Glycyl lysine isopeptide (Lys-Gly) (interchain with G-Cter in ubiquitin). The segment at K2356–S2417 is disordered. Composition is skewed to low complexity over residues P2359 to S2381 and G2388 to P2401. 2 positions are modified to phosphoserine; by host: S2459 and S2472. Residues P2644–D2762 enclose the RdRp catalytic domain. Positions 2650, 2748, and 2749 each coordinate Mg(2+). The chain crosses the membrane as a helical span at residues H3001–R3021.

It belongs to the hepacivirus polyprotein family. In terms of assembly, homooligomer. Interacts with E1 (via C-terminus). Interacts with the non-structural protein 5A. Interacts (via N-terminus) with host STAT1 (via SH2 domain); this interaction results in decreased STAT1 phosphorylation and ubiquitin-mediated proteasome-dependent STAT1 degradation, leading to decreased IFN-stimulated gene transcription. Interacts with host STAT3; this interaction constitutively activates STAT3. Interacts with host LTBR receptor. Interacts with host TNFRSF1A receptor and possibly induces apoptosis. Interacts with host HNRPK. Interacts with host YWHAE. Interacts with host UBE3A/E6AP. Interacts with host DDX3X. Interacts with host APOA2. Interacts with host RXRA protein. Interacts with host SP110 isoform 3/Sp110b; this interaction sequesters the transcriptional corepressor SP110 away from the nucleus. Interacts with host CREB3 nuclear transcription protein; this interaction triggers cell transformation. Interacts with host ACY3. Interacts with host C1QR1. Interacts with host RBM24; this interaction, which enhances the interaction of the mature core protein with 5'-UTR, may inhibit viral translation and favor replication. Interacts with host EIF2AK2/PKR; this interaction induces the autophosphorylation of EIF2AK2. Part of the viral assembly initiation complex composed of NS2, E1, E2, NS3, NS4A, NS5A and the mature core protein. Forms a heterodimer with envelope glycoprotein E2. Interacts with mature core protein. Interacts with protease NS2. The heterodimer E1/E2 interacts with host CLDN1; this interaction plays a role in viral entry into host cell. Interacts with host SPSB2 (via C-terminus). Part of the viral assembly initiation complex composed of NS2, E1, E2, NS3, NS4A, NS5A and the mature core protein. Interacts with host NEURL3; this interaction prevents E1 binding to glycoprotein E2. As to quaternary structure, forms a heterodimer with envelope glycoprotein E1. Interacts with host CD81 and SCARB1 receptors; these interactions play a role in viral entry into host cell. Interacts with host EIF2AK2/PKR; this interaction inhibits EIF2AK2 and probably allows the virus to evade the innate immune response. Interacts with host CD209/DC-SIGN and CLEC4M/DC-SIGNR. Interact with host SPCS1; this interaction is essential for viral particle assembly. Interacts with protease NS2. The heterodimer E1/E2 interacts with host CLDN1; this interaction plays a role in viral entry into host cell. Part of the viral assembly initiation complex composed of NS2, E1, E2, NS3, NS4A, NS5A and the mature core protein. Interacts with host SLC3A2/4F2hc; the interaction may facilitate viral entry into host cell. Interacts with human PLSCR1. In terms of assembly, homohexamer. Homoheptamer. Interacts with protease NS2. Homodimer. Interacts with host SPCS1; this interaction is essential for viral particle assembly. Interacts with envelope glycoprotein E1. Interacts with envelope glycoprotein E2. Interacts with viroporin p7. Interacts with serine protease/helicase NS3. Part of the replication complex composed of NS2, NS3, NS4A, NS4B, NS5A and the RNA-directed RNA polymerase embedded in an ER-derived membranous web. Part of the viral assembly initiation complex composed of NS2, E1, E2, NS3, NS4A, NS5A and the mature core protein. As to quaternary structure, interacts with protease NS2. Interacts with non-structural protein 4A; this interaction stabilizes the folding of NS3 serine protease. NS3-NS4A interaction is essential for NS3 activation and allows membrane anchorage of the latter. NS3/NS4A complex also prevents phosphorylation of host IRF3, thus preventing the establishment of dsRNA induced antiviral state. Interacts with host MAVS; this interaction leads to the cleavage and inhibition of host MAVS. Interacts with host TICAM1; this interaction leads to the cleavage and inhibition of host TICAM1. Interacts with host TANK-binding kinase/TBK1; this interaction results in the inhibition of the association between TBK1 and IRF3, which leads to the inhibition of IRF3 activation. Interacts with host RBM24. Part of the replication complex composed of NS2, NS3, NS4A, NS4B, NS5A and the RNA-directed RNA polymerase embedded in an ER-derived membranous web. Part of the viral assembly initiation complex composed of NS2, E1, E2, NS3, NS4A, NS5A and the mature core protein. In terms of assembly, interacts with NS3 serine protease; this interaction stabilizes the folding of NS3 serine protease. NS3-NS4A interaction is essential for NS3 activation and allows membrane anchorage of the latter. Interacts with non-structural protein 5A (via N-terminus). Part of the replication complex composed of NS2, NS3, NS4A, NS4B, NS5A and the RNA-directed RNA polymerase embedded in an ER-derived membranous web. Part of the viral assembly initiation complex composed of NS2, E1, E2, NS3, NS4A, NS5A and the mature core protein. Homomultimer. Interacts with non-structural protein NS5A. Interacts with host PLA2G4C; this interaction likely initiates the recruitment of replication complexes to lipid droplets. Interacts with host STING; this interaction disrupts the interaction between STING and TBK1 thereby suppressing the interferon signaling. Part of the replication complex composed of NS2, NS3, NS4A, NS4B, NS5A and the RNA-directed RNA polymerase embedded in an ER-derived membranous web. As to quaternary structure, monomer. Homodimer; dimerization is required for RNA-binding. Interacts with the mature core protein. Interacts (via N-terminus) with non-structural protein 4A. Interacts with non-structural protein 4B. Interacts (via region D2) with RNA-directed RNA polymerase. Part of the viral assembly initiation complex composed of NS2, E1, E2, NS3, NS4A, NS5A and the mature core protein. Part of the replication complex composed of NS2, NS3, NS4A, NS4B, NS5A and the RNA-directed RNA polymerase embedded in an ER-derived membranous web. Interacts with host GRB2. Interacts with host BIN1. Interacts with host PIK3R1. Interacts with host SRCAP. Interacts with host FKBP8. Interacts (via C-terminus) with host VAPB (via MSP domain). Interacts with host EIF2AK2/PKR; this interaction leads to disruption of EIF2AK2 dimerization by NS5A and probably allows the virus to evade the innate immune response. Interacts (via N-terminus) with host PACSIN2 (via N-terminus); this interaction attenuates protein kinase C alpha-mediated phosphorylation of PACSIN2 by disrupting the interaction between PACSIN2 and PRKCA. Interacts (via N-terminus) with host SRC kinase (via SH2 domain). Interacts with most Src-family kinases. Interacts with host IFI27 and SKP2; promotes the ubiquitin-mediated proteasomal degradation of NS5A. Interacts with host GPS2. Interacts with host TNFRSF21; this interaction allows the modulation by the virus of JNK, p38 MAPK, STAT3, and Akt signaling pathways in a DR6-dependent manner. Interacts (via N-terminus) with host CIDEB (via N-terminus); this interaction seems to regulate the association of HCV particles with APOE. Interacts with host CHKA/Choline Kinase-alpha; CHKA bridges host PI4KA and NS5A and potentiates NS5A-stimulated PI4KA activity, which then facilitates the targeting of the ternary complex to the ER for viral replication. Interacts with host SPSB2 (via C-terminus); this interaction targets NS5A for ubiquitination and degradation. Interacts with host RAB18; this interaction may promote the association of NS5A and other replicase components with lipid droplets. Interacts (via region D2) with host PPIA/CYPA; the interaction stimulates RNA-binding ability of NS5A and is dependent on the peptidyl-prolyl cis-trans isomerase activity of PPIA/CYPA. Interacts with host TRIM14; this interaction induces the degradation of NS5A. In terms of assembly, homooligomer. Interacts with non-structural protein 5A. Interacts with host VAPB. Interacts with host PRK2/PKN2. Interacts with host HNRNPA1 and SEPT6; these interactions facilitate viral replication. Part of the replication complex composed of NS2, NS3, NS4A, NS4B, NS5A and the RNA-directed RNA polymerase. Zn(2+) is required as a cofactor. The cofactor is Mg(2+). In terms of processing, specific enzymatic cleavages in vivo yield mature proteins. The structural proteins, core, E1, E2 and p7 are produced by proteolytic processing by host signal peptidases. The core protein precursor is synthesized as a 23 kDa, which is retained in the ER membrane through the hydrophobic signal peptide. Cleavage by the signal peptidase releases the 21 kDa mature core protein. The cleavage of the core protein precursor occurs between aminoacids 176 and 188 but the exact cleavage site is not known. Some degraded forms of the core protein appear as well during the course of infection. The other proteins (p7, NS2, NS3, NS4A, NS4B, NS5A and NS5B) are cleaved by the viral proteases. Autoprocessing between NS2 and NS3 is mediated by the NS2 cysteine protease catalytic domain and regulated by the NS3 N-terminal domain. Post-translationally, phosphorylated by host PKC and PKA. Ubiquitinated; mediated by UBE3A and leading to core protein subsequent proteasomal degradation. In terms of processing, highly N-glycosylated. Post-translationally, palmitoylation is required for NS2/3 autoprocessing and E2 recruitment to membranes. Palmitoylated. This modification may play a role in its polymerization or in protein-protein interactions. In terms of processing, phosphorylated on serines in a basal form termed p56. p58 is a hyperphosphorylated form of p56. p56 and p58 coexist in the cell in roughly equivalent amounts. Hyperphosphorylation is dependent on the presence of NS4A. Host CSNK1A1/CKI-alpha or RPS6KB1 kinases may be responsible for NS5A phosphorylation. Post-translationally, tyrosine phosphorylation is essential for the interaction with host SRC. Ubiquitinated. Ubiquitination, most probably at Lys-2350, mediated by host IFI27 and SKP2 leads to proteasomal degradation, restricting viral infection. Ubiquitination by host TRIM22 leads to interruption of viral replication. In terms of processing, the N-terminus is phosphorylated by host PRK2/PKN2.

The protein localises to the host endoplasmic reticulum membrane. Its subcellular location is the host mitochondrion membrane. It is found in the virion. The protein resides in the host cytoplasm. It localises to the host nucleus. The protein localises to the host lipid droplet. Its subcellular location is the virion membrane. It is found in the host mitochondrion. The protein resides in the host cell membrane. It localises to the host perinuclear region. The enzyme catalyses Hydrolysis of four peptide bonds in the viral precursor polyprotein, commonly with Asp or Glu in the P6 position, Cys or Thr in P1 and Ser or Ala in P1'.. It catalyses the reaction a ribonucleoside 5'-triphosphate + H2O = a ribonucleoside 5'-diphosphate + phosphate + H(+). It carries out the reaction ATP + H2O = ADP + phosphate + H(+). The catalysed reaction is RNA(n) + a ribonucleoside 5'-triphosphate = RNA(n+1) + diphosphate. Its activity is regulated as follows. Inhibited by the antiviral drug hexamethylene amiloride. Inhibition by amantadine appears to be genotype-dependent. Also inhibited by long-alkyl-chain iminosugar derivatives. With respect to regulation, activity is up-regulated by PRK2/PKN2-mediated phosphorylation. Packages viral RNA to form a viral nucleocapsid, and promotes virion budding. Participates in the viral particle production as a result of its interaction with the non-structural protein 5A. Binds RNA and may function as a RNA chaperone to induce the RNA structural rearrangements taking place during virus replication. Modulates viral translation initiation by interacting with viral IRES and 40S ribosomal subunit. Affects various cell signaling pathways, host immunity and lipid metabolism. Prevents the establishment of cellular antiviral state by blocking the interferon-alpha/beta (IFN-alpha/beta) and IFN-gamma signaling pathways and by blocking the formation of phosphorylated STAT1 and promoting ubiquitin-mediated proteasome-dependent degradation of STAT1. Activates STAT3 leading to cellular transformation. Regulates the activity of cellular genes, including c-myc and c-fos. May repress the promoter of p53, and sequester CREB3 and SP110 isoform 3/Sp110b in the cytoplasm. Represses cell cycle negative regulating factor CDKN1A, thereby interrupting an important check point of normal cell cycle regulation. Targets transcription factors involved in the regulation of inflammatory responses and in the immune response: suppresses TNF-induced NF-kappa-B activation, and activates AP-1. Binds to dendritic cells (DCs) via C1QR1, resulting in down-regulation of T-lymphocytes proliferation. Alters lipid metabolism by interacting with hepatocellular proteins involved in lipid accumulation and storage. Induces up-regulation of FAS promoter activity, and thereby contributes to the increased triglyceride accumulation in hepatocytes (steatosis). In terms of biological role, forms a heterodimer with envelope glycoprotein E2, which mediates virus attachment to the host cell, virion internalization through clathrin-dependent endocytosis and fusion with host membrane. Fusion with the host cell is most likely mediated by both E1 and E2, through conformational rearrangements of the heterodimer required for fusion rather than a classical class II fusion mechanism. E1/E2 heterodimer binds host apolipoproteins such as APOB and ApoE thereby forming a lipo-viro-particle (LVP). APOE associated to the LVP allows the initial virus attachment to cell surface receptors such as the heparan sulfate proteoglycans (HSPGs), syndecan-1 (SDC1), syndecan-1 (SDC2), the low-density lipoprotein receptor (LDLR) and scavenger receptor class B type I (SCARB1). The cholesterol transfer activity of SCARB1 allows E2 exposure and binding of E2 to SCARB1 and the tetraspanin CD81. E1/E2 heterodimer binding on CD81 activates the epithelial growth factor receptor (EGFR) signaling pathway. Diffusion of the complex E1-E2-EGFR-SCARB1-CD81 to the cell lateral membrane allows further interaction with Claudin 1 (CLDN1) and occludin (OCLN) to finally trigger HCV entry. Its function is as follows. Forms a heterodimer with envelope glycoprotein E1, which mediates virus attachment to the host cell, virion internalization through clathrin-dependent endocytosis and fusion with host membrane. Fusion with the host cell is most likely mediated by both E1 and E2, through conformational rearrangements of the heterodimer required for fusion rather than a classical class II fusion mechanism. The interaction between envelope glycoprotein E2 and host apolipoprotein E/APOE allows the proper assembly, maturation and infectivity of the viral particles. This interaction is probably promoted via the up-regulation of cellular autophagy by the virus. E1/E2 heterodimer binds host apolipoproteins such as APOB and APOE thereby forming a lipo-viro-particle (LVP). APOE associated to the LVP allows the initial virus attachment to cell surface receptors such as the heparan sulfate proteoglycans (HSPGs), syndecan-1 (SDC1), syndecan-1 (SDC2), the low-density lipoprotein receptor (LDLR) and scavenger receptor class B type I (SCARB1). The cholesterol transfer activity of SCARB1 allows E2 exposure and binding of E2 to SCARB1 and the tetraspanin CD81. E1/E2 heterodimer binding on CD81 activates the epithelial growth factor receptor (EGFR) signaling pathway. Diffusion of the complex E1-E2-EGFR-SCARB1-CD81 to the cell lateral membrane allows further interaction with Claudin 1 (CLDN1) and occludin (OCLN) to finally trigger HCV entry. Inhibits host EIF2AK2/PKR activation, preventing the establishment of an antiviral state. Viral ligand for CD209/DC-SIGN and CLEC4M/DC-SIGNR, which are respectively found on dendritic cells (DCs), and on liver sinusoidal endothelial cells and macrophage-like cells of lymph node sinuses. These interactions allow the capture of circulating HCV particles by these cells and subsequent facilitated transmission to permissive cells such as hepatocytes and lymphocyte subpopulations. The interaction between E2 and host amino acid transporter complex formed by SLC3A2 and SLC7A5/LAT1 may facilitate viral entry into host cell. Functionally, ion channel protein that acts as a viroporin and plays an essential role in the assembly, envelopment and secretion of viral particles. Regulates the host cell secretory pathway, which induces the intracellular retention of viral glycoproteins and favors assembly of viral particles. Creates a pore in acidic organelles and releases Ca(2+) and H(+) in the cytoplasm of infected cells, leading to a productive viral infection. High levels of cytoplasmic Ca(2+) may trigger membrane trafficking and transport of viral ER-associated proteins to viroplasms, sites of viral genome replication. This ionic imbalance induces the assembly of the inflammasome complex, which triggers the maturation of pro-IL-1beta into IL-1beta through the action of caspase-1. Targets also host mitochondria and induces mitochondrial depolarization. In addition of its role as a viroporin, acts as a lipid raft adhesion factor. Cysteine protease required for the proteolytic auto-cleavage between the non-structural proteins NS2 and NS3. The N-terminus of NS3 is required for the function of NS2 protease (active region NS2-3). Promotes the initiation of viral particle assembly by mediating the interaction between structural and non-structural proteins. In terms of biological role, displays three enzymatic activities: serine protease with a chymotrypsin-like fold, NTPase and RNA helicase. NS3 serine protease, in association with NS4A, is responsible for the cleavages of NS3-NS4A, NS4A-NS4B, NS4B-NS5A and NS5A-NS5B. The NS3/NS4A complex prevents phosphorylation of host IRF3, thus preventing the establishment of dsRNA induced antiviral state. The NS3/NS4A complex induces host amino acid transporter component SLC3A2, thus contributing to HCV propagation. NS3 RNA helicase binds to RNA and unwinds both dsDNA and dsRNA in the 3' to 5' direction, and likely resolves RNA complicated stable secondary structures in the template strand. Binds a single ATP and catalyzes the unzipping of a single base pair of dsRNA. Inhibits host antiviral proteins TBK1 and IRF3 thereby preventing the establishment of an antiviral state. Cleaves host MAVS/CARDIF thereby preventing the establishment of an antiviral state. Cleaves host TICAM1/TRIF, thereby disrupting TLR3 signaling and preventing the establishment of an antiviral state. Its function is as follows. Peptide cofactor which forms a non-covalent complex with the N-terminal of NS3 serine protease. The NS3/NS4A complex prevents phosphorylation of host IRF3, thus preventing the establishment of dsRNA induced antiviral state. The NS3/NS4A complex induces host amino acid transporter component SLC3A2, thus contributing to HCV propagation. Functionally, induces a specific membrane alteration that serves as a scaffold for the virus replication complex. This membrane alteration gives rise to the so-called ER-derived membranous web that contains the replication complex. NS4B self-interaction contributes to its function in membranous web formation. Promotes host TRIF protein degradation in a CASP8-dependent manner thereby inhibiting host TLR3-mediated interferon signaling. Disrupts the interaction between STING and TBK1 contributing to the inhibition of interferon signaling. Phosphorylated protein that is indispensable for viral replication and assembly. Both hypo- and hyperphosphorylated states are required for the viral life cycle. The hyperphosphorylated form of NS5A is an inhibitor of viral replication. Involved in RNA-binding and especially in binding to the viral genome. Zinc is essential for RNA-binding. Participates in the viral particle production as a result of its interaction with the mature viral core protein. Its interaction with host VAPB may target the viral replication complex to vesicles. Down-regulates viral IRES translation initiation. Mediates interferon resistance, presumably by interacting with and inhibiting host EIF2AK2/PKR. Prevents BIN1-induced apoptosis. Acts as a transcriptional activator of some host genes important for viral replication when localized in the nucleus. Via the interaction with host PACSIN2, modulates lipid droplet formation in order to promote virion assembly. Modulates TNFRSF21/DR6 signaling pathway for viral propagation. In terms of biological role, RNA-dependent RNA polymerase that performs primer-template recognition and RNA synthesis during viral replication. Initiates RNA transcription/replication at a flavin adenine dinucleotide (FAD), resulting in a 5'- FAD cap on viral RNAs. In this way, recognition of viral 5' RNA by host pattern recognition receptors can be bypassed, thereby evading activation of antiviral pathways. The sequence is that of Genome polyprotein from Homo sapiens (Human).